The chain runs to 424 residues: Adenylosuccinate synthetase 1 (424 aa).

Residues 12-18 (GDEGKGK) and 40-42 (GHT) contribute to the GTP site. The Proton acceptor role is filled by Asp13. Residues Asp13 and Gly40 each contribute to the Mg(2+) site. Residues 13–16 (DEGK), 38–41 (NAGH), Thr127, Arg141, Thr236, and Arg304 each bind IMP. Residue His41 is the Proton donor of the active site. 300–306 (ARTGRPR) serves as a coordination point for substrate. GTP-binding positions include Arg306, 332-334 (KLD), and 413-415 (GVG).

Belongs to the adenylosuccinate synthetase family. In terms of assembly, homodimer. It depends on Mg(2+) as a cofactor.

The protein resides in the cytoplasm. It catalyses the reaction IMP + L-aspartate + GTP = N(6)-(1,2-dicarboxyethyl)-AMP + GDP + phosphate + 2 H(+). The protein operates within purine metabolism; AMP biosynthesis via de novo pathway; AMP from IMP: step 1/2. In terms of biological role, plays an important role in the de novo pathway of purine nucleotide biosynthesis. Catalyzes the first committed step in the biosynthesis of AMP from IMP. The protein is Adenylosuccinate synthetase 1 of Methanosarcina acetivorans (strain ATCC 35395 / DSM 2834 / JCM 12185 / C2A).